Here is a 231-residue protein sequence, read N- to C-terminus: Ribonuclease 3 (231 aa).

Positions 1 to 134 constitute an RNase III domain; it reads MKTLEKKLAE…FLGALLLDAG (134 aa). Position 47 (E47) interacts with Mg(2+). D51 is an active-site residue. Residues D120 and E123 each coordinate Mg(2+). Residue E123 is part of the active site. Residues 160–229 form the DRBM domain; the sequence is DYKTALQELL…AKNALEKLQR (70 aa).

Belongs to the ribonuclease III family. As to quaternary structure, homodimer. Requires Mg(2+) as cofactor.

It localises to the cytoplasm. The catalysed reaction is Endonucleolytic cleavage to 5'-phosphomonoester.. In terms of biological role, digests double-stranded RNA. Involved in the processing of primary rRNA transcript to yield the immediate precursors to the large and small rRNAs (23S and 16S). Also processes some mRNAs, and tRNAs when they are encoded in the rRNA operon. CRISPR (clustered regularly interspaced short palindromic repeat) is an adaptive immune system that provides protection against mobile genetic elements (viruses, transposable elements and conjugative plasmids). CRISPR clusters contain spacers, sequences complementary to antecedent mobile elements, and target invading nucleic acids. CRISPR clusters are transcribed and processed into CRISPR RNA (crRNA). In this organism endogenous ribonuclease 3 and Cas9 are required for correct coprocessing of pre-crRNA and the trans-encoded small RNA (tracrRNA). Cas9, crRNA and tracrRNA are required for cleavage of invading DNA. Complements pre-crRNA and tracrRNA coprocessing defects in an rnc deletion in S.pyogenes strain 370. The chain is Ribonuclease 3 from Streptococcus mutans serotype c (strain ATCC 700610 / UA159).